The primary structure comprises 960 residues: Endoplasmic reticulum aminopeptidase 2 (960 aa).

Residues 1–20 (MFHSSAMVNSHRKPMFNIHR) lie on the Cytoplasmic side of the membrane. The helical; Signal-anchor for type II membrane protein transmembrane segment at 21–40 (GFYCLTAILPQICICSQFSV) threads the bilayer. Topologically, residues 41–960 (PSSYHFTEDP…TLRTWLMVNT (920 aa)) are lumenal. 2 N-linked (GlcNAc...) asparagine glycosylation sites follow: Asn85 and Asn119. Glu200 serves as a coordination point for substrate. The N-linked (GlcNAc...) asparagine glycan is linked to Asn219. 334-338 (GAMEN) contacts substrate. A Zn(2+)-binding site is contributed by His370. Glu371 serves as the catalytic Proton acceptor. Zn(2+) is bound by residues His374 and Glu393. Asn405 is a glycosylation site (N-linked (GlcNAc...) asparagine). A disulfide bridge connects residues Cys421 and Cys460. A glycan (N-linked (GlcNAc...) asparagine) is linked at Asn650. A disulfide bridge connects residues Cys759 and Cys766.

This sequence belongs to the peptidase M1 family. Heterodimer with ERAP1. Requires Zn(2+) as cofactor. Post-translationally, N-glycosylated. In terms of tissue distribution, ubiquitously expressed. Highly expressed in spleen and leukocytes.

It localises to the endoplasmic reticulum membrane. In terms of biological role, aminopeptidase that plays a central role in peptide trimming, a step required for the generation of most HLA class I-binding peptides. Peptide trimming is essential to customize longer precursor peptides to fit them to the correct length required for presentation on MHC class I molecules. Preferentially hydrolyzes the basic residues Arg and Lys. The polypeptide is Endoplasmic reticulum aminopeptidase 2 (ERAP2) (Homo sapiens (Human)).